Consider the following 151-residue polypeptide: Transcriptional regulator MraZ (151 aa).

SpoVT-AbrB domains lie at 5-52 and 81-124; these read ATAV…PLMN and ATEC…SDVE.

Belongs to the MraZ family. Forms oligomers.

It localises to the cytoplasm. The protein resides in the nucleoid. The sequence is that of Transcriptional regulator MraZ from Haemophilus influenzae (strain PittGG).